We begin with the raw amino-acid sequence, 822 residues long: Glycerol-3-phosphate acyltransferase (822 aa).

Positions 304–309 match the HXXXXD motif motif; the sequence is CHRSHM.

The protein belongs to the GPAT/DAPAT family.

It localises to the cell inner membrane. It carries out the reaction sn-glycerol 3-phosphate + an acyl-CoA = a 1-acyl-sn-glycero-3-phosphate + CoA. The protein operates within phospholipid metabolism; CDP-diacylglycerol biosynthesis; CDP-diacylglycerol from sn-glycerol 3-phosphate: step 1/3. The sequence is that of Glycerol-3-phosphate acyltransferase from Yersinia enterocolitica serotype O:8 / biotype 1B (strain NCTC 13174 / 8081).